We begin with the raw amino-acid sequence, 296 residues long: Probable endonuclease 4 (296 aa).

Zn(2+) is bound by residues His68, His108, Glu145, Asp179, His182, His216, Asp229, His231, and Glu261.

This sequence belongs to the AP endonuclease 2 family. Zn(2+) serves as cofactor.

It carries out the reaction Endonucleolytic cleavage to 5'-phosphooligonucleotide end-products.. In terms of biological role, endonuclease IV plays a role in DNA repair. It cleaves phosphodiester bonds at apurinic or apyrimidinic (AP) sites, generating a 3'-hydroxyl group and a 5'-terminal sugar phosphate. The sequence is that of Probable endonuclease 4 from Geobacter sulfurreducens (strain ATCC 51573 / DSM 12127 / PCA).